We begin with the raw amino-acid sequence, 161 residues long: Phosphopantetheine adenylyltransferase (161 aa).

Residue Thr10 coordinates substrate. Residues 10 to 11 (TF) and His18 contribute to the ATP site. The substrate site is built by Lys42, Met74, and Arg88. ATP-binding positions include 89–91 (GLR), Glu99, and 124–130 (WSFISSS).

This sequence belongs to the bacterial CoaD family. In terms of assembly, homohexamer. Mg(2+) serves as cofactor.

The protein resides in the cytoplasm. The catalysed reaction is (R)-4'-phosphopantetheine + ATP + H(+) = 3'-dephospho-CoA + diphosphate. Its pathway is cofactor biosynthesis; coenzyme A biosynthesis; CoA from (R)-pantothenate: step 4/5. Its function is as follows. Reversibly transfers an adenylyl group from ATP to 4'-phosphopantetheine, yielding dephospho-CoA (dPCoA) and pyrophosphate. This Serratia marcescens protein is Phosphopantetheine adenylyltransferase.